Here is a 148-residue protein sequence, read N- to C-terminus: Arginine repressor (148 aa).

This sequence belongs to the ArgR family.

It is found in the cytoplasm. It participates in amino-acid biosynthesis; L-arginine biosynthesis [regulation]. Functionally, regulates arginine biosynthesis genes. This chain is Arginine repressor, found in Chlorobium chlorochromatii (strain CaD3).